Consider the following 745-residue polypeptide: Serine/threonine-protein kinase GG21441 (745 aa).

The disordered stretch occupies residues 49–73 (RNQQQNVQKDFDSHNRDCDSPVSST). Over residues 57–67 (KDFDSHNRDCD) the composition is skewed to basic and acidic residues. 2 Doublecortin domains span residues 159-245 (LRIK…VEYN) and 315-398 (RIVT…AEDF). In terms of domain architecture, Protein kinase spans 479–737 (YTLGRIIGDG…SEDILDHYWT (259 aa)). ATP is bound by residues 485–493 (IGDGNFAIV) and lysine 508. The active-site Proton acceptor is the aspartate 600.

This sequence belongs to the protein kinase superfamily. CAMK Ser/Thr protein kinase family. CaMK subfamily.

The enzyme catalyses L-seryl-[protein] + ATP = O-phospho-L-seryl-[protein] + ADP + H(+). It catalyses the reaction L-threonyl-[protein] + ATP = O-phospho-L-threonyl-[protein] + ADP + H(+). The polypeptide is Serine/threonine-protein kinase GG21441 (Drosophila erecta (Fruit fly)).